The following is a 332-amino-acid chain: Adenosine deaminase (332 aa).

Zn(2+) is bound by residues histidine 12 and histidine 14. Substrate contacts are provided by histidine 14, aspartate 16, and glycine 170. Zn(2+) is bound at residue histidine 197. The active-site Proton donor is glutamate 200. Aspartate 278 serves as a coordination point for Zn(2+).

This sequence belongs to the metallo-dependent hydrolases superfamily. Adenosine and AMP deaminases family. Adenosine deaminase subfamily. Zn(2+) is required as a cofactor.

It carries out the reaction adenosine + H2O + H(+) = inosine + NH4(+). It catalyses the reaction 2'-deoxyadenosine + H2O + H(+) = 2'-deoxyinosine + NH4(+). In terms of biological role, catalyzes the hydrolytic deamination of adenosine and 2-deoxyadenosine. The protein is Adenosine deaminase of Clostridium perfringens (strain 13 / Type A).